A 128-amino-acid chain; its full sequence is Holo-[acyl-carrier-protein] synthase (128 aa).

Mg(2+)-binding residues include aspartate 9 and glutamate 60.

It belongs to the P-Pant transferase superfamily. AcpS family. The cofactor is Mg(2+).

The protein resides in the cytoplasm. The enzyme catalyses apo-[ACP] + CoA = holo-[ACP] + adenosine 3',5'-bisphosphate + H(+). Transfers the 4'-phosphopantetheine moiety from coenzyme A to a Ser of acyl-carrier-protein. This Buchnera aphidicola subsp. Baizongia pistaciae (strain Bp) protein is Holo-[acyl-carrier-protein] synthase.